The sequence spans 206 residues: MARYLGPKLKLSRREGTDLFLKSGVRAIDSKCKIDTAPGQHGARKPRLSDYGSQLREKQKVRRIYGILERQFRNYYKEANRLKGNTGENLLVLLEGRLDNVVYRMGFATTRAEARQLVSHKAIVVNGRVVNIPSFQVSVNDVVAIREKSKKQARIKASLELAEQREKPTWLEVDSAKMEGVFKRVPERSDLSADINEHLIVELYSK.

One can recognise an S4 RNA-binding domain in the interval 96–156 (GRLDNVVYRM…EKSKKQARIK (61 aa)).

Belongs to the universal ribosomal protein uS4 family. Part of the 30S ribosomal subunit. Contacts protein S5. The interaction surface between S4 and S5 is involved in control of translational fidelity.

One of the primary rRNA binding proteins, it binds directly to 16S rRNA where it nucleates assembly of the body of the 30S subunit. Its function is as follows. With S5 and S12 plays an important role in translational accuracy. The protein is Small ribosomal subunit protein uS4 of Haemophilus influenzae (strain ATCC 51907 / DSM 11121 / KW20 / Rd).